The chain runs to 393 residues: Probable alpha-1,6-mannosyltransferase MNN10 (393 aa).

Topologically, residues 1 to 52 are cytoplasmic; the sequence is MSSVPYNSQLPISNHLEYDEDEKKSRGSKLGLKYKMIYWRKTLCSSLARWRK. The chain crosses the membrane as a helical; Signal-anchor for type II membrane protein span at residues 53–73; the sequence is LILLISLALFLFIWISDSTIS. Residues 74-393 are Lumenal-facing; the sequence is RNPSTTSFQG…RKWYTRFFFP (320 aa). Residues 77–97 form a disordered region; the sequence is STTSFQGQNSNDNKLSNTGSS.

This sequence belongs to the glycosyltransferase 34 family. In terms of assembly, component of the M-Pol II complex composed of ANP1, MNN9, MNN10, MNN11 and HOC1.

It localises to the endoplasmic reticulum membrane. The protein localises to the golgi apparatus. Its subcellular location is the cis-Golgi network membrane. Required for polarized growth and efficient budding. In terms of biological role, the M-Pol II complex possesses alpha-1,6-mannosyltransferase activity and is probably involved in the elongation of the mannan backbone of N-linked glycans on cell wall and periplasmic proteins. The chain is Probable alpha-1,6-mannosyltransferase MNN10 (MNN10) from Saccharomyces cerevisiae (strain ATCC 204508 / S288c) (Baker's yeast).